Consider the following 655-residue polypeptide: RalA-binding protein 1-A (655 aa).

A disordered region spans residues M1 to D153. A compositionally biased stretch (basic and acidic residues) spans D52–H68. G69–K74 is an ATP binding site. Basic residues-rich tracts occupy residues G69–E79 and K102–S118. The nuclear localization signal stretch occupies residues K102–K119. The segment covering K119–T150 has biased composition (basic and acidic residues). Repeat copies occupy residues E133–K137 and E138–K142. Positions E133–K142 are 2 X 5 AA tandem repeats of E-[D/E]-K-H-K. Positions L149 to F214 are mediates association with membranes and could form transmembrane domains. The Rho-GAP domain maps to I187–M383. Positions R398 to M495 are mediates interaction with RALA and RALB. Residue A413–K420 coordinates ATP. The tract at residues A494 to I510 is required to maintain nuclear localization. Residues E496–I655 are mediates interaction with REPS1 and REPS2. Disordered regions lie at residues I520–L548 and L600–I655. Residues E532–L548 are compositionally biased toward acidic residues. Basic and acidic residues predominate over residues N619–P630.

In terms of assembly, interacts with the active, GTP-bound form of ralB and ralA.

The protein localises to the cell membrane. The protein resides in the cytoplasm. Its subcellular location is the cytosol. It localises to the cytoskeleton. It is found in the spindle pole. The protein localises to the nucleus. The protein resides in the mitochondrion. Its subcellular location is the cell projection. It localises to the lamellipodium. It carries out the reaction an S-substituted glutathione(in) + ATP + H2O = an S-substituted glutathione(out) + ADP + phosphate + H(+). The enzyme catalyses ATP + H2O + xenobioticSide 1 = ADP + phosphate + xenobioticSide 2.. The catalysed reaction is leukotriene C4(in) + ATP + H2O = leukotriene C4(out) + ADP + phosphate + H(+). Multifunctional protein that functions as a downstream effector of ralA and ralB. As a GTPase-activating protein/GAP can inactivate CDC42 and RAC1 by stimulating their GTPase activity. As part of the Ral signaling pathway, may also regulate ligand-dependent EGF and insulin receptors-mediated endocytosis. During mitosis, may act as a scaffold protein in the phosphorylation of EPSIN/EPN1 by the mitotic kinase cyclin B-CDK1, preventing endocytosis during that phase of the cell cycle. During mitosis, also controls mitochondrial fission as an effector of ralA. Recruited to mitochondrion by ralA, acts as a scaffold to foster the mitotic kinase cyclin B-CDK1-mediated phosphorylation and activation of DNM1L. Acts on the cytoskeleton, to regulate pigment distribution and to regulate gastrulation. Functionally, could also function as a primary ATP-dependent active transporter for glutathione conjugates of electrophiles. May also actively catalyze the efflux of a wide range of substrates including xenobiotics like doxorubicin (DOX) contributing to cell multidrug resistance. The protein is RalA-binding protein 1-A (ralbp1-a) of Xenopus laevis (African clawed frog).